The chain runs to 358 residues: C-X-C chemokine receptor type 4 (358 aa).

Positions 1–25 (MDGFSGGIDINIFDSNSTENGSGDF) are important for chemokine binding and signaling. The Extracellular segment spans residues 1-44 (MDGFSGGIDINIFDSNSTENGSGDFEDFSEPCFMHDNSDFNRIF). 2 N-linked (GlcNAc...) asparagine glycosylation sites follow: Asn16 and Asn20. 2 disulfides stabilise this stretch: Cys32/Cys281 and Cys113/Cys190. Residues 45–67 (LPTIYSFIFLLGIIGNGLVVVVM) traverse the membrane as a helical segment. The Cytoplasmic portion of the chain corresponds to 68–81 (GYQKKSRTMTDKYR). Residues 82-103 (LHLSVADLLFVFTLPFWSVDAA) form a helical membrane-spanning segment. A chemokine binding region spans residues 98-101 (WSVD). The Extracellular portion of the chain corresponds to 104–114 (IGWYFKEFLCK). A helical transmembrane segment spans residues 115–134 (AVHVIYTVNLYSSVLILAFI). Residues 117–121 (HVIYT) are chemokine binding. The Cytoplasmic segment spans residues 135 to 158 (SLDRYLAIVHATNSQGSRKMLADK). Residues 139-151 (YLAIVHATNSQGS) are involved in dimerization; when bound to chemokine. Residues 159-178 (VVYAGVWLPALLLTVPDLVF) traverse the membrane as a helical segment. The Extracellular portion of the chain corresponds to 179–202 (ARVSDENGQFVCDRIYPIDNRETW). The tract at residues 190–194 (CDRIY) is chemokine binding, important for signaling. The chain crosses the membrane as a helical span at residues 203 to 223 (TVGFRFLHITVGLILPGLIIL). Topologically, residues 224–248 (ICYCVIISKLSHSKGHQKRKALKTT) are cytoplasmic. The helical transmembrane segment at 249–268 (VILILAFFACWLPYYVCLTT) threads the bilayer. At 269–289 (DTFMLLGLLKADCIWENTLHK) the chain is on the extracellular side. The chain crosses the membrane as a helical span at residues 290-309 (AISITEALAFFHCCLNPILY). The Cytoplasmic portion of the chain corresponds to 310–358 (AFLGAKFKTSAQNAFTSVSRGSSLKILSKKRAGLSSVSTESESSSFHSS). A disordered region spans residues 338–358 (KKRAGLSSVSTESESSSFHSS). The segment covering 344–358 (SSVSTESESSSFHSS) has biased composition (low complexity).

Belongs to the G-protein coupled receptor 1 family. In terms of assembly, monomer. Can form dimers. In terms of processing, sulfation is required for efficient binding of cxcl12/sdf-1alpha and promotes its dimerization. Post-translationally, O- and N-glycosylated.

Its subcellular location is the cell membrane. It is found in the cytoplasm. The protein resides in the nucleus. The protein localises to the early endosome. It localises to the late endosome. Its subcellular location is the lysosome. Functionally, receptor for the C-X-C chemokine cxcl12/sdf-1. Transduces a signal by increasing the intracellular calcium ion level. Signaling with cxcl12/sdf-1 mediates the directional movement of mesodermal cells during gastrulation. May play a role in the migration of embryonic presumptive primordial germ cells (pPGCs). May also be involved in regulating migration of hematopoietic stem cells into the larval liver. This Xenopus tropicalis (Western clawed frog) protein is C-X-C chemokine receptor type 4.